Reading from the N-terminus, the 1872-residue chain is E3 ubiquitin-protein ligase UBR2 (1872 aa).

Residues 96 to 172 (TACTRLCFPS…DAFKCKNELN (77 aa)) form a UBR-type zinc finger. Lys709 participates in a covalent cross-link: Glycyl lysine isopeptide (Lys-Gly) (interchain with G-Cter in ubiquitin). The segment at 1134–1240 (RYLMETAPHV…SSNTINSCCD (107 aa)) is interaction with UBC2. Residues 1203-1227 (NNSVDTSDISTPRTTSPSLSPTRIN) form a disordered region. Low complexity predominate over residues 1212 to 1225 (STPRTTSPSLSPTR). 2 positions are modified to phosphoserine: Ser1218 and Ser1222. An RING-type; atypical zinc finger spans residues 1241-1362 (DDCVFCKMPK…GLIYCPVCNS (122 aa)).

Belongs to the E3 ubiquitin-protein ligase UBR1-like family. As to quaternary structure, interacts with MUB1, RPN4 and UBC2.

It is found in the cytoplasm. It carries out the reaction S-ubiquitinyl-[E2 ubiquitin-conjugating enzyme]-L-cysteine + [acceptor protein]-L-lysine = [E2 ubiquitin-conjugating enzyme]-L-cysteine + N(6)-ubiquitinyl-[acceptor protein]-L-lysine.. Its pathway is protein modification; protein ubiquitination. E3 ubiquitin-protein ligase which probably functions outside the N-end rule pathway, since it lacks the residues essential for the degradation of N-end rule substrates. Mediates RPN4 ubiquitination and subsequent degradation. The sequence is that of E3 ubiquitin-protein ligase UBR2 (UBR2) from Saccharomyces cerevisiae (strain ATCC 204508 / S288c) (Baker's yeast).